The chain runs to 683 residues: Dipeptidyl-peptidase 5 (683 aa).

The N-terminal stretch at 1 to 19 (MHSLFKQLVFFLVMTLTAA) is a signal peptide. N-linked (GlcNAc...) asparagine glycosylation is found at Asn-53, Asn-69, Asn-103, Asn-116, Asn-126, and Asn-400. Residues Ser-535, Asp-617, and His-649 each act as charge relay system in the active site.

The protein belongs to the peptidase S9C family.

Its subcellular location is the secreted. It localises to the cytoplasm. The protein localises to the nucleus. The chain is Dipeptidyl-peptidase 5 from Schizosaccharomyces pombe (strain 972 / ATCC 24843) (Fission yeast).